The following is a 218-amino-acid chain: LexA repressor (218 aa).

A DNA-binding region (H-T-H motif) is located at residues 31–51; that stretch reads IREIQDGLRISSTSVVAYNLR. Active-site for autocatalytic cleavage activity residues include serine 137 and lysine 176.

It belongs to the peptidase S24 family. In terms of assembly, homodimer.

The enzyme catalyses Hydrolysis of Ala-|-Gly bond in repressor LexA.. Represses a number of genes involved in the response to DNA damage (SOS response), including recA and lexA. In the presence of single-stranded DNA, RecA interacts with LexA causing an autocatalytic cleavage which disrupts the DNA-binding part of LexA, leading to derepression of the SOS regulon and eventually DNA repair. The sequence is that of LexA repressor from Roseiflexus sp. (strain RS-1).